Here is a 155-residue protein sequence, read N- to C-terminus: Endoribonuclease YbeY (155 aa).

Zn(2+) contacts are provided by histidine 120, histidine 124, and histidine 130.

Belongs to the endoribonuclease YbeY family. The cofactor is Zn(2+).

It localises to the cytoplasm. Its function is as follows. Single strand-specific metallo-endoribonuclease involved in late-stage 70S ribosome quality control and in maturation of the 3' terminus of the 16S rRNA. The polypeptide is Endoribonuclease YbeY (Alkaliphilus metalliredigens (strain QYMF)).